The chain runs to 66 residues: Large ribosomal subunit protein bL33c (66 aa).

Belongs to the bacterial ribosomal protein bL33 family.

The protein resides in the plastid. Its subcellular location is the chloroplast. This Acorus calamus (Sweet flag) protein is Large ribosomal subunit protein bL33c.